A 99-amino-acid polypeptide reads, in one-letter code: Large ribosomal subunit protein uL23 (99 aa).

Belongs to the universal ribosomal protein uL23 family. In terms of assembly, part of the 50S ribosomal subunit. Contacts protein L29, and trigger factor when it is bound to the ribosome.

Functionally, one of the early assembly proteins it binds 23S rRNA. One of the proteins that surrounds the polypeptide exit tunnel on the outside of the ribosome. Forms the main docking site for trigger factor binding to the ribosome. The chain is Large ribosomal subunit protein uL23 from Agathobacter rectalis (strain ATCC 33656 / DSM 3377 / JCM 17463 / KCTC 5835 / VPI 0990) (Eubacterium rectale).